Reading from the N-terminus, the 252-residue chain is Protein lin-28 homolog B (252 aa).

Positions Met-1–Val-30 are disordered. Basic and acidic residues predominate over residues Gly-9–Glu-19. Positions Leu-32–Pro-105 constitute a CSD domain. 2 consecutive CCHC-type zinc fingers follow at residues Asp-130–Leu-147 and Lys-152–His-169. Residues Cys-132, Cys-135, His-140, Cys-145, Cys-154, Cys-157, His-162, and Cys-167 each contribute to the Zn(2+) site. Positions Val-172 to Lys-252 are disordered. Residues Gly-213–Ser-222 show a composition bias toward basic and acidic residues. Positions Pro-225 to Glu-238 are enriched in polar residues.

This sequence belongs to the lin-28 family.

The protein localises to the nucleus. The protein resides in the nucleolus. Functionally, suppressor of specific microRNA (miRNA) biogenesis. Binds target primary miRNA transcripts and sequester them in the nucleolus, away from the microprocessor complex, hence preventing their processing into mature miRNA. The specific interaction with target pri-miRNAs occurs via an 5'-GGAG-3' motif in the pre-miRNA terminal loop. This Xenopus laevis (African clawed frog) protein is Protein lin-28 homolog B (lin28b).